The following is a 187-amino-acid chain: UPF0301 protein ETA_28320 (187 aa).

It belongs to the UPF0301 (AlgH) family.

This Erwinia tasmaniensis (strain DSM 17950 / CFBP 7177 / CIP 109463 / NCPPB 4357 / Et1/99) protein is UPF0301 protein ETA_28320.